The sequence spans 420 residues: Glutamyl-tRNA reductase (420 aa).

Substrate contacts are provided by residues 49 to 52 (TCNR), Ser-107, 112 to 114 (EPQ), and Gln-118. Cys-50 functions as the Nucleophile in the catalytic mechanism. Position 187–192 (187–192 (GAGETI)) interacts with NADP(+).

It belongs to the glutamyl-tRNA reductase family. In terms of assembly, homodimer.

It catalyses the reaction (S)-4-amino-5-oxopentanoate + tRNA(Glu) + NADP(+) = L-glutamyl-tRNA(Glu) + NADPH + H(+). It participates in porphyrin-containing compound metabolism; protoporphyrin-IX biosynthesis; 5-aminolevulinate from L-glutamyl-tRNA(Glu): step 1/2. Functionally, catalyzes the NADPH-dependent reduction of glutamyl-tRNA(Glu) to glutamate 1-semialdehyde (GSA). This chain is Glutamyl-tRNA reductase, found in Photobacterium profundum (strain SS9).